Reading from the N-terminus, the 633-residue chain is Guanylate-binding protein 6 (633 aa).

The interval 1-310 is GTPase domain (Globular); sequence MESGPKMLAP…EAVNSGAVPC (310 aa). Residues 35–277 enclose the GB1/RHD3-type G domain; the sequence is SQPVVVVAIV…FSSYIFTHAR (243 aa). GTP contacts are provided by residues 45–52, 67–69, and 97–101; these read GLYRTGKS, LGS, and DTEGL.

This sequence belongs to the TRAFAC class dynamin-like GTPase superfamily. GB1/RHD3 GTPase family. GB1 subfamily.

The protein resides in the cytoplasmic vesicle. It carries out the reaction GTP + H2O = GDP + phosphate + H(+). Interferon (IFN)-inducible GTPase that plays important roles in innate immunity against a diverse range of bacterial, viral and protozoan pathogens, such as bacterial pathogens Listeria monocytogenes and Mycobacterium bovis BCG as well as the protozoan pathogen Toxoplasma gondii. Confers protection to several pathogens, including the bacterial pathogens Listeria monocytogenes and Mycobacterium bovis BCG as well as the protozoan pathogen Toxoplasma gondii. This Pongo abelii (Sumatran orangutan) protein is Guanylate-binding protein 6 (GBP6).